The primary structure comprises 1012 residues: Formate dehydrogenase 2 subunit alpha (cytochrome c-553) (1012 aa).

Positions 1 to 33 (MKTTRRSFLKLVGVSVVGLSLGQLGFDLEDAQA) form a signal peptide, tat-type signal. A 4Fe-4S Mo/W bis-MGD-type domain is found at 43 to 99 (AKEVGTVCPFCSVCCQVIAYVRNGKLVSTEGDPDFPVNEGALCAKGAALFSMYTNPH). [4Fe-4S] cluster is bound by residues cysteine 50, cysteine 53, cysteine 57, and cysteine 85. Selenocysteine 189 lines the W-bis(molybdopterin guanine dinucleotide) pocket. A non-standard amino acid (selenocysteine) is located at residue selenocysteine 189. Ca(2+)-binding residues include threonine 389, arginine 391, lysine 394, leucine 424, and asparagine 426.

The protein belongs to the prokaryotic molybdopterin-containing oxidoreductase family. Heterotrimer of cytochrome c3 FDH2C and formate dehydrogenase FDH2 alpha and beta subunits that forms the FdhABC(3) complex. [4Fe-4S] cluster serves as cofactor. The cofactor is W-bis(molybdopterin guanine dinucleotide). Predicted to be exported by the Tat system. The position of the signal peptide cleavage has not been experimentally proven.

The protein resides in the periplasm. It carries out the reaction 2 Fe(III)-[cytochrome c553] + formate = 2 Fe(II)-[cytochrome c553] + CO2 + H(+). Functionally, alpha chain of the formate dehydrogenase (FDH) that catalyzes the reversible two-electron oxidation of formate to carbon dioxide. The alpha subunit of formate dehydrogenase forms the active site. This is Formate dehydrogenase 2 subunit alpha (cytochrome c-553) from Nitratidesulfovibrio vulgaris (strain ATCC 29579 / DSM 644 / CCUG 34227 / NCIMB 8303 / VKM B-1760 / Hildenborough) (Desulfovibrio vulgaris).